Consider the following 647-residue polypeptide: Type II methyltransferase M.FokI (647 aa).

Short sequence motifs (adenine-specific methylase) lie at residues 218 to 221 (DPPY) and 548 to 551 (DPPY).

It belongs to the N(4)/N(6)-methyltransferase family. As to quaternary structure, monomer.

It catalyses the reaction a 2'-deoxyadenosine in DNA + S-adenosyl-L-methionine = an N(6)-methyl-2'-deoxyadenosine in DNA + S-adenosyl-L-homocysteine + H(+). An alpha subtype methylase that recognizes the asymmetric double-stranded sequence 5'-GGATG-3', methylates A-3 of both strands, and protects the DNA from cleavage by the FokI endonuclease. In Planomicrobium okeanokoites (Planococcus okeanokoites), this protein is Type II methyltransferase M.FokI.